The primary structure comprises 357 residues: Protein RecA (357 aa).

67 to 74 (GPESSGKT) is a binding site for ATP.

It belongs to the RecA family.

The protein resides in the cytoplasm. Can catalyze the hydrolysis of ATP in the presence of single-stranded DNA, the ATP-dependent uptake of single-stranded DNA by duplex DNA, and the ATP-dependent hybridization of homologous single-stranded DNAs. It interacts with LexA causing its activation and leading to its autocatalytic cleavage. This chain is Protein RecA, found in Shewanella oneidensis (strain ATCC 700550 / JCM 31522 / CIP 106686 / LMG 19005 / NCIMB 14063 / MR-1).